The following is a 56-amino-acid chain: Envelope protein H3 (56 aa).

This sequence belongs to the orthopoxvirus OPG108 family. Post-translationally, does not contain disulfide bonds.

The protein resides in the virion membrane. Envelope protein that binds to heparan sulfate on the cell surface and might provide virion attachment to target cell. This chain is Envelope protein H3 (OPG108), found in Vaccinia virus (strain L-IVP) (VACV).